A 910-amino-acid chain; its full sequence is MLSKLLTKVIGSRNDRTLRRMRKIVDEINKLEPQFDSLQDEDLKAKTVEFRERLDQGESLDLLLPEAFATVREASKRVFGMRHFDVQLLGGMVLNNCQIAEMRTGEGKTLTATLPAYLNALTGKGVHIVTVNDYLAARDAETNRALFEFLGMTVGINVPNMPPQAKKEAYSADVLYGTNNEFGFDYLRDNMAFRPEDRVQRERFFAVVDEVDSILIDEARTPLIISGPAEDSSDLYTRINLLIPQLVKQDQEDSEDFRGDGHYTVDEKSKQTHLTENGQEFVEELLTQQGMMAEDDTLYSPSNISLLHHITAALRAHVLFERDVDYIVKDDEVIIVDEHTGRTMPGRRWSEGLHQAVEAKEGVKIQNENQTLASITFQNYFRLYSKLSGMTGTADTEAFEFQSIYGLETVVMPTNKPMVRDDMGDLVYMTEAEKFAAICEDIKERFAKGQPVLVGTVSIEKSELLSNALKKEGIKHEVLNAKFHEKEAYIIANAGQSGAVTIATNMAGRGTDIVLGGSWQEEISNLQDPTDAQIAQIKVDWKVRHETVLAAGGLHITGTERHESRRIDNQLRGRSGRQGDAGSSRFYLSMEDGLMRIFASDRVSNMMKKLGMEEGEAIEHPWVTKAIENAQRKVEGRNFDIRKQLLEFDDVANDQRQVVYELRDELMNADDISGMITQNRDDVILAVVDTYIPQQSLEEMWDIKGLEERLKADFDLELPIQEWLDTEEKLYEEALRERIVAKAIEVYQQKEEVVGAEVLRNFEKTVMLQNLDTLWKEHLAAMDHLRQGIHLRGYAQKNPKQEYKRESFELFEEMLDSLKSDVVSILSKVRVQQQEEVDRMEEERRQQAEELARRQQYQHQNAASQIADESDAGQPAESGTFEREARKVGRNEPCPCGSGKKYKQCHGKIN.

ATP contacts are provided by residues Gln-87, 105 to 109 (GEGKT), and Asp-512. Composition is skewed to basic and acidic residues over residues 561–571 (RHESRRIDNQL), 841–853 (EEER…ELAR), and 880–890 (TFEREARKVGR). 2 disordered regions span residues 561-584 (RHES…AGSS) and 835-910 (EEVD…GKIN). The Zn(2+) site is built by Cys-894, Cys-896, Cys-905, and His-906. The segment covering 900 to 910 (KKYKQCHGKIN) has biased composition (basic residues).

Belongs to the SecA family. As to quaternary structure, monomer and homodimer. Part of the essential Sec protein translocation apparatus which comprises SecA, SecYEG and auxiliary proteins SecDF-YajC and YidC. Zn(2+) is required as a cofactor.

It is found in the cell inner membrane. It localises to the cytoplasm. The catalysed reaction is ATP + H2O + cellular proteinSide 1 = ADP + phosphate + cellular proteinSide 2.. Its function is as follows. Part of the Sec protein translocase complex. Interacts with the SecYEG preprotein conducting channel. Has a central role in coupling the hydrolysis of ATP to the transfer of proteins into and across the cell membrane, serving both as a receptor for the preprotein-SecB complex and as an ATP-driven molecular motor driving the stepwise translocation of polypeptide chains across the membrane. The sequence is that of Protein translocase subunit SecA from Photobacterium profundum (strain SS9).